Here is a 104-residue protein sequence, read N- to C-terminus: Ribonucleotide reductase inhibitor protein SML1 (104 aa).

M1 carries the post-translational modification N-acetylmethionine. The tract at residues 43–62 (PMLSTQNSMGSSASASASSL) is disordered. Phosphoserine; by DUN1 occurs at positions 56, 58, and 60.

In terms of assembly, homodimer; disulfide-linked. Interacts with RNR1. Phosphorylated by DUN1, a downstream effector of the Mec1/Rad53 checkpoint pathway, in response to DNA damage. This promotes ubiquitination of SML1 and targets it for degradation by the 26S proteasome.

The protein resides in the nucleus. It localises to the cytoplasm. In terms of biological role, strong inhibitor of ribonucleotide reductase (RNR1) and is involved in regulating dNTP production. This is Ribonucleotide reductase inhibitor protein SML1 (SML1) from Saccharomyces cerevisiae (strain ATCC 204508 / S288c) (Baker's yeast).